The sequence spans 693 residues: Phosphoribosylformylglycinamidine synthase subunit PurL (693 aa).

The active site involves histidine 34. 2 residues coordinate ATP: tyrosine 37 and lysine 76. Position 78 (glutamate 78) interacts with Mg(2+). Residues 79-82 and arginine 101 each bind substrate; that span reads SHNH. Histidine 80 (proton acceptor) is an active-site residue. Residue aspartate 102 participates in Mg(2+) binding. Glutamine 222 is a binding site for substrate. Aspartate 248 serves as a coordination point for Mg(2+). 292–294 contributes to the substrate binding site; the sequence is ETQ. ATP-binding residues include aspartate 470 and glycine 507. Serine 510 serves as a coordination point for substrate.

Belongs to the FGAMS family. Monomer. Part of the FGAM synthase complex composed of 1 PurL, 1 PurQ and 2 PurS subunits.

It localises to the cytoplasm. It catalyses the reaction N(2)-formyl-N(1)-(5-phospho-beta-D-ribosyl)glycinamide + L-glutamine + ATP + H2O = 2-formamido-N(1)-(5-O-phospho-beta-D-ribosyl)acetamidine + L-glutamate + ADP + phosphate + H(+). Its pathway is purine metabolism; IMP biosynthesis via de novo pathway; 5-amino-1-(5-phospho-D-ribosyl)imidazole from N(2)-formyl-N(1)-(5-phospho-D-ribosyl)glycinamide: step 1/2. Functionally, part of the phosphoribosylformylglycinamidine synthase complex involved in the purines biosynthetic pathway. Catalyzes the ATP-dependent conversion of formylglycinamide ribonucleotide (FGAR) and glutamine to yield formylglycinamidine ribonucleotide (FGAM) and glutamate. The FGAM synthase complex is composed of three subunits. PurQ produces an ammonia molecule by converting glutamine to glutamate. PurL transfers the ammonia molecule to FGAR to form FGAM in an ATP-dependent manner. PurS interacts with PurQ and PurL and is thought to assist in the transfer of the ammonia molecule from PurQ to PurL. The chain is Phosphoribosylformylglycinamidine synthase subunit PurL from Pyrobaculum islandicum (strain DSM 4184 / JCM 9189 / GEO3).